The primary structure comprises 439 residues: Uracil-regulated protein 1 (439 aa).

The segment at M1 to V24 is disordered. R268 to E272 provides a ligand contact to GTP. Residues C273, C284, and C286 each coordinate Zn(2+). E315–R317 contributes to the GTP binding site. Catalysis depends on D353, which acts as the Proton acceptor. R355 (nucleophile) is an active-site residue. 2 residues coordinate GTP: S377 and K382.

It belongs to the GTP cyclohydrolase II family.

It is found in the cytoplasm. The protein resides in the nucleus. The protein is Uracil-regulated protein 1 (urg1) of Schizosaccharomyces pombe (strain 972 / ATCC 24843) (Fission yeast).